We begin with the raw amino-acid sequence, 449 residues long: Maltose-6'-phosphate glucosidase (449 aa).

6-72 (FSIVIAGGGS…PDIEFAATTD (67 aa)) contacts NAD(+). 2 residues coordinate substrate: R95 and N149. Mn(2+) is bound at residue C171. D172 acts as the Proton donor in catalysis. A Mn(2+)-binding site is contributed by H202. Residue Y265 is the Proton acceptor of the active site. R285 provides a ligand contact to substrate.

It belongs to the glycosyl hydrolase 4 family. In terms of assembly, homotetramer. It depends on Mn(2+) as a cofactor. Fe(2+) serves as cofactor. Co(2+) is required as a cofactor. The cofactor is Ni(2+). Requires NAD(+) as cofactor.

It carries out the reaction alpha-maltose 6'-phosphate + H2O = D-glucose 6-phosphate + D-glucose. With respect to regulation, cellobiose-6'-phosphate and 6-phospho-beta-D-glucopyranoside are not substrates but competitive inhibitors of GlvA. Its function is as follows. Hydrolyzes maltose-6'-phosphate and trehalose-6'-phosphate. Is involved in the catabolism of alpha-glycosides accumulated via a phosphoenolpyruvate-dependent maltose phosphotransferase system (PEP-PTS). Is also able to significantly catalyze the hydrolysis of both 6-phospho-alpha- and 6-phospho-beta-glucosides containing activated leaving groups such as p-nitrophenol and does so with retention and inversion, respectively, of the substrate anomeric configuration. The sequence is that of Maltose-6'-phosphate glucosidase (glvA) from Bacillus subtilis (strain 168).